The primary structure comprises 431 residues: Helix-loop-helix protein 11 (431 aa).

A disordered region spans residues 88-109 (LANRSLSQPAPLSPTSLDPDRR). Polar residues predominate over residues 91-103 (RSLSQPAPLSPTS). One can recognise a bHLH domain in the interval 112–163 (MRRQIANCNERRRMQSINAGFLALRALLPRKEGEKLSKAAILQQTADMVHQL). Composition is skewed to polar residues over residues 226–241 (TTTS…PRSN) and 248–257 (LPSSYASSAL). Residues 226–311 (TTTSSQASSP…PPPTLPSLET (86 aa)) are disordered. Positions 274–291 (TTSTPLSLLTLNGSPTSS) are enriched in low complexity.

Expressed in the pharynx, nerve cords, the H-shaped excretory cell, vulva muscles, and the anal depressor (at protein level). Expressed in the intestine (at protein level). In males, it is also expressed in the spicules and hyp7 cells of the hypodermis (at protein level).

Its subcellular location is the nucleus. In terms of biological role, transcriptional regulator. Component of a feedback loop involving atfs-1, atgl-1 and hlh-11. Binds to the promoter of the atgl-1 lipase to negatively regulate the expression of atgl-1, and thereby promoting fat oxidation in response to mitochondrial stress and mitochondrial respiration in the intestine. In addition, functions with atfs-1 to maintain lifespan. May have a role in fertility and in positively regulating body size. The protein is Helix-loop-helix protein 11 of Caenorhabditis elegans.